We begin with the raw amino-acid sequence, 318 residues long: tRNA dimethylallyltransferase (318 aa).

Residue 9 to 16 coordinates ATP; it reads GATASGKT. 11-16 serves as a coordination point for substrate; that stretch reads TASGKT. Interaction with substrate tRNA stretches follow at residues 34-37 and 158-162; these read DSAQ and QRIIR.

It belongs to the IPP transferase family. Monomer. Requires Mg(2+) as cofactor.

It catalyses the reaction adenosine(37) in tRNA + dimethylallyl diphosphate = N(6)-dimethylallyladenosine(37) in tRNA + diphosphate. Functionally, catalyzes the transfer of a dimethylallyl group onto the adenine at position 37 in tRNAs that read codons beginning with uridine, leading to the formation of N6-(dimethylallyl)adenosine (i(6)A). In Dichelobacter nodosus (strain VCS1703A), this protein is tRNA dimethylallyltransferase.